The primary structure comprises 182 residues: Adenine phosphoribosyltransferase (182 aa).

It belongs to the purine/pyrimidine phosphoribosyltransferase family. Homodimer.

The protein resides in the cytoplasm. The enzyme catalyses AMP + diphosphate = 5-phospho-alpha-D-ribose 1-diphosphate + adenine. It functions in the pathway purine metabolism; AMP biosynthesis via salvage pathway; AMP from adenine: step 1/1. Catalyzes a salvage reaction resulting in the formation of AMP, that is energically less costly than de novo synthesis. The chain is Adenine phosphoribosyltransferase from Wolinella succinogenes (strain ATCC 29543 / DSM 1740 / CCUG 13145 / JCM 31913 / LMG 7466 / NCTC 11488 / FDC 602W) (Vibrio succinogenes).